Reading from the N-terminus, the 195-residue chain is Cholesin (195 aa).

The disordered stretch occupies residues 1 to 78 (MAKHKRKGLE…KEEKKRLREA (78 aa)). 2 stretches are compositionally biased toward basic and acidic residues: residues 8–18 (GLEGTGKESKR) and 26–39 (ETPRTSEAGPDKET). S41, S48, and S52 each carry phosphoserine. Residues 53-77 (PEERRVLERKLKKERKKEEKKRLRE) are compositionally biased toward basic and acidic residues. Phosphoserine is present on S96.

Secreted via exosomes, secreted from the instestine, secretion is induced by feeding and cholesterol absorption. Expressed in enterocytes.

It is found in the secreted. Functionally, hormone secreted from the intestine in response to cholesterol, where it acts to inhibit cholesterol synthesis in the liver and VLDL secretion,leading to a reduction in circulating cholesterol levels. Acts through binding to its receptor, GPR146. In Mus musculus (Mouse), this protein is Cholesin (Chlsn).